The following is a 972-amino-acid chain: 116 kDa U5 small nuclear ribonucleoprotein component (972 aa).

Positions 1–53 are disordered; it reads MDTDLYDEFGNYIGPELDSDDEDDELGRESKELDELEDDDDDDDMGDHDEDHP. Composition is skewed to acidic residues over residues 17–26 and 34–48; these read LDSDDEDDEL and DELE…MGDH. The tr-type G domain maps to 127–409; it reads ELIRNVTLCG…GIHLTKEELK (283 aa). GTP is bound by residues 136–143, 204–208, and 258–261; these read GHLHHGKT, DTPGH, and NKID.

Belongs to the TRAFAC class translation factor GTPase superfamily. Classic translation factor GTPase family. EF-G/EF-2 subfamily. Component of the U5 snRNP and the U4/U6-U5 tri-snRNP complex, a building block of the spliceosome. Component of the pre-catalytic, catalytic and post-catalytic spliceosome complexes. Component of the minor spliceosome, which splices U12-type introns.

The protein localises to the nucleus. Functionally, required for pre-mRNA splicing as component of the spliceosome, including pre-catalytic, catalytic and post-catalytic spliceosomal complexes. Component of the U5 snRNP and the U4/U6-U5 tri-snRNP complex, a building block of the spliceosome. As a component of the minor spliceosome, involved in the splicing of U12-type introns in pre-mRNAs. This is 116 kDa U5 small nuclear ribonucleoprotein component (EFTUD2) from Gallus gallus (Chicken).